The primary structure comprises 255 residues: 3-dehydroquinate dehydratase (255 aa).

3-dehydroquinate-binding positions include 47–49 (EWR) and R83. The active-site Proton donor/acceptor is H144. The Schiff-base intermediate with substrate role is filled by K171. 3-dehydroquinate is bound by residues R214, S233, and Q237.

This sequence belongs to the type-I 3-dehydroquinase family. Homodimer or homotetramer.

The catalysed reaction is 3-dehydroquinate = 3-dehydroshikimate + H2O. It participates in metabolic intermediate biosynthesis; chorismate biosynthesis; chorismate from D-erythrose 4-phosphate and phosphoenolpyruvate: step 3/7. In terms of biological role, involved in the third step of the chorismate pathway, which leads to the biosynthesis of aromatic amino acids. Catalyzes the cis-dehydration of 3-dehydroquinate (DHQ) and introduces the first double bond of the aromatic ring to yield 3-dehydroshikimate. The reaction involves the formation of an imine intermediate between the keto group of 3-dehydroquinate and the epsilon-amino group of Lys-170 at the active site. The sequence is that of 3-dehydroquinate dehydratase from Clostridioides difficile (strain 630) (Peptoclostridium difficile).